Here is a 167-residue protein sequence, read N- to C-terminus: Respiratory supercomplex factor 1-A, mitochondrial (167 aa).

The region spanning 1–86 is the HIG1 domain; the sequence is MCSDFEEETS…TERKQRREFE (86 aa). 2 consecutive transmembrane segments (helical) span residues 21–38 and 53–75; these read EPLIPLGCAATCYALYRA and MFRARIYAQFFTLLAVVAGGMYY. The stretch at 75 to 107 forms a coiled coil; the sequence is YKTERKQRREFEKKVEERKAQEKRDAWLRELEA.

The protein belongs to the RCF1 family. As to quaternary structure, associates with the respiratory chain complex III/complex IV supercomplex.

Its subcellular location is the mitochondrion membrane. Its function is as follows. Cytochrome c oxidase subunit which plays a role in assembly of respiratory supercomplexes. The chain is Respiratory supercomplex factor 1-A, mitochondrial (rcf1-A) from Talaromyces marneffei (strain ATCC 18224 / CBS 334.59 / QM 7333) (Penicillium marneffei).